Here is a 259-residue protein sequence, read N- to C-terminus: Undecaprenyl-diphosphatase 4 (259 aa).

Transmembrane regions (helical) follow at residues 1-21, 39-59, 71-91, 99-119, 133-153, 174-194, 208-228, and 239-259; these read MNWLEAFILGIIQGLTEFLPI, AGLFLDTMLHIGTLLAVFIYY, FSKLMLLLIVGTIPAVVIGLL, ISKTGITIGWEFLVTGFFLYM, ITYKDAFIIGSFQAAAIFPAI, AYFSFLLSTPAIVGAIILQFV, SLIVGTLSAAFFGYIAVSWMI, and FAYYVWGLGILILTLQFTDVF.

It belongs to the UppP family.

Its subcellular location is the cell membrane. The enzyme catalyses di-trans,octa-cis-undecaprenyl diphosphate + H2O = di-trans,octa-cis-undecaprenyl phosphate + phosphate + H(+). Its function is as follows. Catalyzes the dephosphorylation of undecaprenyl diphosphate (UPP). Confers resistance to bacitracin. This chain is Undecaprenyl-diphosphatase 4, found in Bacillus cereus (strain ZK / E33L).